Here is a 218-residue protein sequence, read N- to C-terminus: Non-structural protein NS3 (218 aa).

This sequence belongs to the orbivirus NS3 family.

In terms of biological role, may play a role in the release of virions from infected cells. The protein is Non-structural protein NS3 (Segment-10) of Camelus dromedarius (Dromedary).